The chain runs to 148 residues: Putative nickel-responsive regulator (148 aa).

Ni(2+) contacts are provided by H88, H99, H101, and C107.

Belongs to the transcriptional regulatory CopG/NikR family. Requires Ni(2+) as cofactor.

Its function is as follows. Transcriptional regulator. The chain is Putative nickel-responsive regulator from Helicobacter pylori (strain P12).